The sequence spans 551 residues: MLSRKCGSLSLTLKNFNSTLSVAYSASDAALKIPIADPSENAASKYANKPAKTLNDAVRERSERFRSRVYTAKIPKLHEEQVSSGFSSPCNKLRSFLHSRDYMAFLVELTLQSRMDENFGAKMFQNNDLSIAEFSAFIEGLLSVNNLLHKLSATLPNVSGTEMVFSLYQLYLKTVTPGPLSPLQLHDFNKFIRFFIRSAQLRKAQTVLDCILKSNNNQLPCDSATATHYLQLRCGALPRNWKVLDENLGRSTRLGARKNRYQLVSHSYKALDHKSVLTFMSLLSDPKSVWFHRKSAALESAVVYSLGFMGQLKLLEEHVWRNWGISLQEHNQVTDASFTSPSSEVLVAVLTSYASNKNISSALHLIDGFMAKYPTLELDHVFWRRLFQWSTRVWSEKTDPRGELSRGCWRVMREWHAARNRQLPADAVLLNERFVVLSRTNNYRDAIEVVEQCYSSFFQKANLSRHEAVLFQKFAKLILKNMAHLGYYHKPLKFIKEWSPNKLLEHTLRAYFEKHRNAYSARKQRRTEAAQKAQKRFDDEEEDSMLLGRLW.

Residues 530–551 (AQKAQKRFDDEEEDSMLLGRLW) form a disordered region.

Belongs to the AEP2 family. Binds to the 5'UTR of the OLI1 mRNA.

Its subcellular location is the mitochondrion. Required for translation of the mitochondrial OLI1 transcript coding for the mitochondrial ATP synthase subunit 9. This is ATPase expression protein 2, mitochondrial (AEP2) from Lachancea thermotolerans (strain ATCC 56472 / CBS 6340 / NRRL Y-8284) (Yeast).